A 1031-amino-acid chain; its full sequence is Error-prone DNA polymerase (1031 aa).

The protein belongs to the DNA polymerase type-C family. DnaE2 subfamily.

It localises to the cytoplasm. It catalyses the reaction DNA(n) + a 2'-deoxyribonucleoside 5'-triphosphate = DNA(n+1) + diphosphate. DNA polymerase involved in damage-induced mutagenesis and translesion synthesis (TLS). It is not the major replicative DNA polymerase. In Pseudomonas aeruginosa (strain ATCC 15692 / DSM 22644 / CIP 104116 / JCM 14847 / LMG 12228 / 1C / PRS 101 / PAO1), this protein is Error-prone DNA polymerase.